The following is a 64-amino-acid chain: Translation machinery-associated protein 7 (64 aa).

Positions 1-64 (MSGREGGKKK…GSGIKKSGKK (64 aa)) are disordered. The stretch at 21–50 (DMDDDDVAFKQKQKEDQKAMEALKARASGK) forms a coiled coil. Residues 27-44 (VAFKQKQKEDQKAMEALK) are compositionally biased toward basic and acidic residues.

It belongs to the TMA7 family.

This chain is Translation machinery-associated protein 7 (tma7), found in Tetraodon nigroviridis (Spotted green pufferfish).